A 274-amino-acid chain; its full sequence is Large ribosomal subunit protein uL2c (274 aa).

The interval 230-252 (HPHGGGEGRSPIGRSKPLTPWGK) is disordered.

Belongs to the universal ribosomal protein uL2 family. As to quaternary structure, part of the 50S ribosomal subunit.

The protein resides in the plastid. This chain is Large ribosomal subunit protein uL2c (rpl2), found in Euglena longa (Euglenophycean alga).